The sequence spans 234 residues: Probable chemoreceptor glutamine deamidase CheD (234 aa).

The protein belongs to the CheD family.

The enzyme catalyses L-glutaminyl-[protein] + H2O = L-glutamyl-[protein] + NH4(+). Its function is as follows. Probably deamidates glutamine residues to glutamate on methyl-accepting chemotaxis receptors (MCPs), playing an important role in chemotaxis. This chain is Probable chemoreceptor glutamine deamidase CheD, found in Burkholderia pseudomallei (strain 1710b).